The following is a 264-amino-acid chain: Glutamate 5-kinase (264 aa).

Lys9 contacts ATP. 3 residues coordinate substrate: Ser47, Asp132, and Asn144. Residues 164–165 and 206–212 each bind ATP; these read SD and TGGIVTK.

The protein belongs to the glutamate 5-kinase family.

The protein resides in the cytoplasm. It catalyses the reaction L-glutamate + ATP = L-glutamyl 5-phosphate + ADP. The protein operates within amino-acid biosynthesis; L-proline biosynthesis; L-glutamate 5-semialdehyde from L-glutamate: step 1/2. Catalyzes the transfer of a phosphate group to glutamate to form L-glutamate 5-phosphate. The sequence is that of Glutamate 5-kinase from Helicobacter hepaticus (strain ATCC 51449 / 3B1).